Here is a 943-residue protein sequence, read N- to C-terminus: Receptor-like kinase TMK3 (943 aa).

The first 24 residues, 1 to 24 (MSNSHLGTLCFIISLLGLANFSLS), serve as a signal peptide directing secretion. Residues 25 to 482 (QTGLDDSTMQ…ETSKKSSNVK (458 aa)) lie on the Extracellular side of the membrane. Asn41 carries N-linked (GlcNAc...) asparagine glycosylation. Cys54 and Cys61 are disulfide-bonded. LRR repeat units follow at residues 64–88 (SNRVTKIQLKQKGIRGTLPTNLQSL), 89–111 (SELVILELFLNRISGPIPDLSGL), 112–134 (SRLQTLNLHDNLFTSVPKNLFSG), 136–160 (SSLQEMYLENNPFDPWVIPDTVKEA), 162–183 (SLQNLTLSNCSIIGKIPDFFGS), 186–210 (LPSLTNLKLSQNGLEGELPMSFAGT), 212–232 (IQSLFLNGQKLNGSISVLGNM), 233–254 (TSLVEVSLQGNQFSGPIPDLSG), 255–279 (LVSLRVFNVRENQLTGVVPQSLVSL), and 281–301 (SLTTVNLTNNYLQGPTPLFGK). 2 N-linked (GlcNAc...) asparagine glycosylation sites follow: Asn165 and Asn170. N-linked (GlcNAc...) asparagine glycosylation is found at Asn223 and Asn231. N-linked (GlcNAc...) asparagine glycosylation is present at Asn286. Disulfide bonds link Cys315–Cys323 and Cys353–Cys361. 3 LRR repeats span residues 363–386 (GGNITVVNMRKQDLSGTISPSLAK), 387–410 (LTSLETINLADNKLSGHIPDELTT), and 411–438 (LSKLRLLDVSNNDFYGIPPKFRDTVTLV). N-linked (GlcNAc...) asparagine glycosylation is present at Asn365. The tract at residues 441-476 (GNANMGKNGPNKTSDAPGASPGSKPSGGSDGSETSK) is disordered. An N-linked (GlcNAc...) asparagine glycan is attached at Asn451. Positions 454-467 (SDAPGASPGSKPSG) are enriched in low complexity. A helical transmembrane segment spans residues 483 to 503 (IIVPVVGGVVGALCLVGLGVC). Topologically, residues 504–943 (LYAKKRKRPA…ADSFTSVDGR (440 aa)) are cytoplasmic. A disordered region spans residues 514-534 (RVQSPSSNMVIHPHHSGDNDD). In terms of domain architecture, Protein kinase spans 585–866 (FSEENILGRG…AHIVNVLSSL (282 aa)). ATP contacts are provided by residues 591–599 (LGRGGFGTV) and Lys613. Asp714 functions as the Proton acceptor in the catalytic mechanism. A disordered region spans residues 904 to 943 (QTADDSGSSSSAYGSKDNTQTSIPTRPSGFADSFTSVDGR). The span at 906-918 (ADDSGSSSSAYGS) shows a compositional bias: low complexity. A compositionally biased stretch (polar residues) spans 919–928 (KDNTQTSIPT).

This sequence belongs to the protein kinase superfamily. Ser/Thr protein kinase family. As to expression, expressed in roots, leaves, stems, siliques and flowers.

The protein localises to the membrane. The catalysed reaction is L-seryl-[protein] + ATP = O-phospho-L-seryl-[protein] + ADP + H(+). The enzyme catalyses L-threonyl-[protein] + ATP = O-phospho-L-threonyl-[protein] + ADP + H(+). Involved in auxin signal transduction and cell expansion and proliferation regulation. This is Receptor-like kinase TMK3 from Arabidopsis thaliana (Mouse-ear cress).